The sequence spans 156 residues: Probable cyclic pyranopterin monophosphate synthase (156 aa).

Substrate-binding positions include 74 to 76 (LCH) and 110 to 111 (ME). The active site involves Asp-125.

Belongs to the MoaC family. As to quaternary structure, homohexamer; trimer of dimers.

It catalyses the reaction (8S)-3',8-cyclo-7,8-dihydroguanosine 5'-triphosphate = cyclic pyranopterin phosphate + diphosphate. The protein operates within cofactor biosynthesis; molybdopterin biosynthesis. Functionally, catalyzes the conversion of (8S)-3',8-cyclo-7,8-dihydroguanosine 5'-triphosphate to cyclic pyranopterin monophosphate (cPMP). The sequence is that of Probable cyclic pyranopterin monophosphate synthase from Thermococcus onnurineus (strain NA1).